We begin with the raw amino-acid sequence, 407 residues long: Arginine deiminase (407 aa).

Catalysis depends on C397, which acts as the Amidino-cysteine intermediate.

Belongs to the arginine deiminase family.

Its subcellular location is the cytoplasm. The enzyme catalyses L-arginine + H2O = L-citrulline + NH4(+). It participates in amino-acid degradation; L-arginine degradation via ADI pathway; carbamoyl phosphate from L-arginine: step 1/2. The polypeptide is Arginine deiminase (arcA) (Escherichia coli O6:H1 (strain CFT073 / ATCC 700928 / UPEC)).